Here is a 1109-residue protein sequence, read N- to C-terminus: Myosin ID heavy chain (1109 aa).

The 681-residue stretch at 7-687 folds into the Myosin motor domain; the sequence is HGVDDMVMLS…TVFNLEELRE (681 aa). Residue 101–108 participates in ATP binding; the sequence is GESGAGKT. The tract at residues 564–586 is actin-binding; it reads IGALVKALSACTPHYIRCIKPNG. A TH1 domain is found at 725–919; it reads KERRRLSIER…VSTPSDGLPA (195 aa). Residues 958–1017 form the SH3 domain; sequence NVKPSAKALYDFDAESSMELSFKEGDILTVLDQSSGDWWDAELKGRRGKVPSNYLQLIKN. Residues 1017–1109 form a disordered region; that stretch reads NAAPPRAGGP…APRGGMAPRV (93 aa). The segment covering 1030–1043 has biased composition (low complexity); the sequence is TGNRAPTTTTTSGG.

This sequence belongs to the TRAFAC class myosin-kinesin ATPase superfamily. Myosin family. Myosin I heavy chain is single-headed. Dimer of a heavy and a light chain. Inability to self-assemble into filaments.

It localises to the cell projection. The protein localises to the pseudopodium. The protein resides in the cytoplasm. It is found in the cell cortex. Functionally, myosin is a protein that binds to actin and has ATPase activity that is activated by actin. Myosin id may have a role in chemotaxis and aggregation; it could serve to stabilize and even retract cortical structures, such as pseudopods and lamellopods. Involved in the process of phagocytosis. The polypeptide is Myosin ID heavy chain (myoD) (Dictyostelium discoideum (Social amoeba)).